The sequence spans 289 residues: Phosphatidylserine decarboxylase proenzyme (289 aa).

Active-site charge relay system; for autoendoproteolytic cleavage activity residues include D89, H146, and S252. S252 acts as the Schiff-base intermediate with substrate; via pyruvic acid; for decarboxylase activity in catalysis. S252 carries the post-translational modification Pyruvic acid (Ser); by autocatalysis.

Belongs to the phosphatidylserine decarboxylase family. PSD-B subfamily. Prokaryotic type I sub-subfamily. In terms of assembly, heterodimer of a large membrane-associated beta subunit and a small pyruvoyl-containing alpha subunit. It depends on pyruvate as a cofactor. Is synthesized initially as an inactive proenzyme. Formation of the active enzyme involves a self-maturation process in which the active site pyruvoyl group is generated from an internal serine residue via an autocatalytic post-translational modification. Two non-identical subunits are generated from the proenzyme in this reaction, and the pyruvate is formed at the N-terminus of the alpha chain, which is derived from the carboxyl end of the proenzyme. The autoendoproteolytic cleavage occurs by a canonical serine protease mechanism, in which the side chain hydroxyl group of the serine supplies its oxygen atom to form the C-terminus of the beta chain, while the remainder of the serine residue undergoes an oxidative deamination to produce ammonia and the pyruvoyl prosthetic group on the alpha chain. During this reaction, the Ser that is part of the protease active site of the proenzyme becomes the pyruvoyl prosthetic group, which constitutes an essential element of the active site of the mature decarboxylase.

The protein localises to the cell membrane. The enzyme catalyses a 1,2-diacyl-sn-glycero-3-phospho-L-serine + H(+) = a 1,2-diacyl-sn-glycero-3-phosphoethanolamine + CO2. The protein operates within phospholipid metabolism; phosphatidylethanolamine biosynthesis; phosphatidylethanolamine from CDP-diacylglycerol: step 2/2. Catalyzes the formation of phosphatidylethanolamine (PtdEtn) from phosphatidylserine (PtdSer). The protein is Phosphatidylserine decarboxylase proenzyme of Nitrosospira multiformis (strain ATCC 25196 / NCIMB 11849 / C 71).